The chain runs to 184 residues: Adenine phosphoribosyltransferase (184 aa).

This sequence belongs to the purine/pyrimidine phosphoribosyltransferase family. In terms of assembly, homodimer.

It is found in the cytoplasm. The enzyme catalyses AMP + diphosphate = 5-phospho-alpha-D-ribose 1-diphosphate + adenine. It participates in purine metabolism; AMP biosynthesis via salvage pathway; AMP from adenine: step 1/1. Catalyzes a salvage reaction resulting in the formation of AMP, that is energically less costly than de novo synthesis. This Parafrankia sp. (strain EAN1pec) protein is Adenine phosphoribosyltransferase.